We begin with the raw amino-acid sequence, 373 residues long: Glutamine synthetase (373 aa).

An N-acetylalanine modification is found at alanine 2. A required for glutamine-induced ubiquitination by CRL4(CRBN) and proteasomal degradation region spans residues 2–25; it reads ATSASSHLNKGIKQVYMALPQGDK. Residues lysine 11 and lysine 14 each carry the N6-acetyllysine modification. The GS beta-grasp domain maps to 26–106; that stretch reads VQAMYIWIDG…VFCEVFKYNR (81 aa). Tyrosine 104 bears the Phosphotyrosine mark. Positions 113-373 constitute a GS catalytic domain; that stretch reads LRHTCKRIMD…TGDEPFQYKN (261 aa). Glutamate 134 contributes to the ATP binding site. Residues glutamate 134, glutamate 136, glutamate 196, and glutamate 203 each contribute to the Mn(2+) site. 203–208 contributes to the ATP binding site; it reads EFQIGP. 246-247 is a binding site for L-glutamate; it reads NW. Residue histidine 253 participates in Mn(2+) binding. Residues 255–257, arginine 319, and arginine 324 each bind ATP; that span reads NFS. Arginine 319 serves as a coordination point for L-glutamate. ADP is bound at residue 336-338; the sequence is YFE. Mn(2+) is bound at residue glutamate 338. Arginine 340 provides a ligand contact to L-glutamate. Position 343 is a phosphoserine (serine 343).

It belongs to the glutamine synthetase family. Decamer; composed of two pentamers. Interacts with PALMD. Interacts with RHOJ. Interacts with BEST2; this interaction tethers a fraction of GLUL to the membrane, causing a decrease of cytosolic glutamine synthase (GS) activity and inhibits the chloride channel activity of BEST2 by affecting the gating at the aperture in the absence of intracellular glutamate. It depends on Mg(2+) as a cofactor. Requires Mn(2+) as cofactor. Post-translationally, palmitoylated; undergoes autopalmitoylation. Acetylated by EP300/p300; acetylation is stimulated by increased glutamine levels and promotes ubiquitin-mediated proteasomal degradation. In terms of processing, ubiquitinated by ZNRF1. Ubiquitinated by the DCX (DDB1-CUL4-X-box) E3 ubiquitin-protein ligase complex called CRL4(CRBN), leading to proteasomal degradation.

It localises to the cytoplasm. The protein resides in the cytosol. Its subcellular location is the microsome. The protein localises to the mitochondrion. It is found in the cell membrane. The enzyme catalyses L-glutamate + NH4(+) + ATP = L-glutamine + ADP + phosphate + H(+). The catalysed reaction is L-cysteinyl-[protein] + hexadecanoyl-CoA = S-hexadecanoyl-L-cysteinyl-[protein] + CoA. With respect to regulation, glutamine synthetase activity is inhibited by methionine sulfoximine (MSO). Glutamine synthetase that catalyzes the ATP-dependent conversion of glutamate and ammonia to glutamine. Its role depends on tissue localization: in the brain, it regulates the levels of toxic ammonia and converts neurotoxic glutamate to harmless glutamine, whereas in the liver, it is one of the enzymes responsible for the removal of ammonia. Plays a key role in ammonium detoxification during erythropoiesis: the glutamine synthetase activity is required to remove ammonium generated by porphobilinogen deaminase (HMBS) during heme biosynthesis to prevent ammonium accumulation and oxidative stress. Essential for proliferation of fetal skin fibroblasts. Independently of its glutamine synthetase activity, required for endothelial cell migration during vascular development. Involved in angiogenesis by regulating membrane localization and activation of the GTPase RHOJ, possibly by promoting RHOJ palmitoylation. May act as a palmitoyltransferase for RHOJ: able to autopalmitoylate and then transfer the palmitoyl group to RHOJ. Plays a role in ribosomal 40S subunit biogenesis. Through the interaction with BEST2, inhibits BEST2 channel activity by affecting the gating at the aperture in the absence of intracellular L-glutamate, but sensitizes BEST2 to intracellular L-glutamate, which promotes the opening of BEST2 and thus relieves its inhibitory effect on BEST2. This Bos taurus (Bovine) protein is Glutamine synthetase.